The chain runs to 2410 residues: Cell wall alpha-1,3-glucan synthase ags1 (2410 aa).

Ser1643, Ser1644, and Ser1651 each carry phosphoserine. Thr1653 is modified (phosphothreonine). Positions 1685 to 1706 (SLSLGSRRGPGHTTEDDASDGL) are disordered. A phosphoserine mark is found at Ser1738 and Ser1812. The tract at residues 1796 to 1827 (QDDLSDPARSVDSDSVSPPLPPFVAGSNPNAR) is disordered. Low complexity predominate over residues 1802-1827 (PARSVDSDSVSPPLPPFVAGSNPNAR).

This sequence belongs to the glycosyltransferase group 1 family. Interacts with sad1.

The enzyme catalyses [(1-&gt;3)-alpha-D-glucosyl](n) + UDP-alpha-D-glucose = [(1-&gt;3)-alpha-D-glucosyl](n+1) + UDP + H(+). Required for alpha-1,3-glucan and alpha-1,4-glucan production which are required for cell wall synthesis. The protein is Cell wall alpha-1,3-glucan synthase ags1 (ags1) of Schizosaccharomyces pombe (strain 972 / ATCC 24843) (Fission yeast).